We begin with the raw amino-acid sequence, 224 residues long: 2,5-diamino-6-ribosylamino-4(3H)-pyrimidinone 5'-phosphate reductase (224 aa).

NADP(+) contacts are provided by residues Thr-57, Asp-61, 82–85 (STAN), Val-131, and 153–156 (GASI).

It belongs to the HTP reductase family. In terms of assembly, homodimer.

It carries out the reaction 2,5-diamino-6-(1-D-ribitylamino)pyrimidin-4(3H)-one 5'-phosphate + NADP(+) = 2,5-diamino-6-(1-D-ribosylamino)pyrimidin-4(3H)-one 5'-phosphate + NADPH + H(+). It catalyses the reaction 2,5-diamino-6-(1-D-ribitylamino)pyrimidin-4(3H)-one 5'-phosphate + NAD(+) = 2,5-diamino-6-(1-D-ribosylamino)pyrimidin-4(3H)-one 5'-phosphate + NADH + H(+). Its pathway is cofactor biosynthesis; riboflavin biosynthesis. Functionally, catalyzes an early step in riboflavin biosynthesis, the NADPH-dependent reduction of the ribose side chain of 2,5-diamino-6-ribosylamino-4(3H)-pyrimidinone 5'-phosphate, yielding 2,5-diamino-6-ribitylamino-4(3H)-pyrimidinone 5'-phosphate. This Aquifex aeolicus (strain VF5) protein is 2,5-diamino-6-ribosylamino-4(3H)-pyrimidinone 5'-phosphate reductase (ribD2).